A 203-amino-acid chain; its full sequence is Recombination protein RecR (203 aa).

The segment at 57 to 72 (CQRCRTLAETPLCSIC) adopts a C4-type zinc-finger fold. In terms of domain architecture, Toprim spans 80–175 (GLLCVVESPA…RLSRLAYGVP (96 aa)).

It belongs to the RecR family.

May play a role in DNA repair. It seems to be involved in an RecBC-independent recombinational process of DNA repair. It may act with RecF and RecO. This chain is Recombination protein RecR, found in Chromohalobacter salexigens (strain ATCC BAA-138 / DSM 3043 / CIP 106854 / NCIMB 13768 / 1H11).